We begin with the raw amino-acid sequence, 464 residues long: MTAQLSKKGEAWSARFNEPVSDLVKRYTASVFFDKRLAQVDIQGSLAHAEMLAHQNIISQEDHAEIRRGMAQILEEITAGKFEWLLDLEDVHLNIEKRLTELVGDAGKRLHTGRSRNDQVATDIRLYVRSEIDNIVGLLRDLRLALLDLAEQHADTILPGFTHMQVAQPITFGHHMLAYVEMFSRDAERMQDCRKRVNRLPLGAAALAGTTFPIDRERVAKTLGFDDVCHNSLDAVSDRDFAIEFCAAAALIMTHVSRMSEELVIWMSPRIGFIDIADRFCTGSSIMPQKKNPDVPELARGKTGRVNGHLIALLTLMKGQPLAYNKDNQEDKEPLFDTVDTVVDTLRIFADMATGITVKPDAMRAAALQGYATATDLADYLVKKGLPFRDAHEAVAHAVRACVDRGIDLSDLTLEEMQAFSKLIEADIFAVLTLEGSVAARNHVGGTAPQQVRAAIARHRAKLA.

This sequence belongs to the lyase 1 family. Argininosuccinate lyase subfamily.

The protein resides in the cytoplasm. It carries out the reaction 2-(N(omega)-L-arginino)succinate = fumarate + L-arginine. Its pathway is amino-acid biosynthesis; L-arginine biosynthesis; L-arginine from L-ornithine and carbamoyl phosphate: step 3/3. The sequence is that of Argininosuccinate lyase from Herminiimonas arsenicoxydans.